A 490-amino-acid polypeptide reads, in one-letter code: Glutamyl-tRNA(Gln) amidotransferase subunit A (490 aa).

Active-site charge relay system residues include Lys78 and Ser158. Residue Ser182 is the Acyl-ester intermediate of the active site.

The protein belongs to the amidase family. GatA subfamily. In terms of assembly, heterotrimer of A, B and C subunits.

It carries out the reaction L-glutamyl-tRNA(Gln) + L-glutamine + ATP + H2O = L-glutaminyl-tRNA(Gln) + L-glutamate + ADP + phosphate + H(+). Functionally, allows the formation of correctly charged Gln-tRNA(Gln) through the transamidation of misacylated Glu-tRNA(Gln) in organisms which lack glutaminyl-tRNA synthetase. The reaction takes place in the presence of glutamine and ATP through an activated gamma-phospho-Glu-tRNA(Gln). This chain is Glutamyl-tRNA(Gln) amidotransferase subunit A, found in Caulobacter sp. (strain K31).